A 415-amino-acid chain; its full sequence is Glutamyl-tRNA reductase (415 aa).

Substrate contacts are provided by residues 49–52 (TCNR), Ser-104, 109–111 (EPQ), and Gln-115. Cys-50 serves as the catalytic Nucleophile. An NADP(+)-binding site is contributed by 184–189 (GAGEMI).

This sequence belongs to the glutamyl-tRNA reductase family. In terms of assembly, homodimer.

The catalysed reaction is (S)-4-amino-5-oxopentanoate + tRNA(Glu) + NADP(+) = L-glutamyl-tRNA(Glu) + NADPH + H(+). It participates in porphyrin-containing compound metabolism; protoporphyrin-IX biosynthesis; 5-aminolevulinate from L-glutamyl-tRNA(Glu): step 1/2. In terms of biological role, catalyzes the NADPH-dependent reduction of glutamyl-tRNA(Glu) to glutamate 1-semialdehyde (GSA). The protein is Glutamyl-tRNA reductase of Neisseria gonorrhoeae (strain ATCC 700825 / FA 1090).